Consider the following 398-residue polypeptide: tRNA (guanine-N(7)-)-methyltransferase (398 aa).

The S-adenosyl-L-methionine site is built by Glu-124, Glu-149, and Asp-176. Asp-232 serves as a coordination point for substrate.

The protein belongs to the class I-like SAM-binding methyltransferase superfamily. TrmB family.

It carries out the reaction guanosine(46) in tRNA + S-adenosyl-L-methionine = N(7)-methylguanosine(46) in tRNA + S-adenosyl-L-homocysteine. Its pathway is tRNA modification; N(7)-methylguanine-tRNA biosynthesis. Catalyzes the formation of N(7)-methylguanine at position 46 (m7G46) in tRNA. The chain is tRNA (guanine-N(7)-)-methyltransferase from Helicobacter acinonychis (strain Sheeba).